Here is a 188-residue protein sequence, read N- to C-terminus: UPF0301 protein MCA2336 2 (188 aa).

The protein belongs to the UPF0301 (AlgH) family.

The protein is UPF0301 protein MCA2336 2 of Methylococcus capsulatus (strain ATCC 33009 / NCIMB 11132 / Bath).